The following is a 479-amino-acid chain: Protein phosphatase 1B (479 aa).

Positions 1 to 14 are enriched in basic and acidic residues; sequence MGAFLDKPKTEKHN. Residues 1 to 20 form a disordered region; sequence MGAFLDKPKTEKHNAHGAGN. Glycine 2 carries N-myristoyl glycine lipidation. Lysine 12 is covalently cross-linked (Glycyl lysine isopeptide (Lys-Gly) (interchain with G-Cter in ISG15)). The PPM-type phosphatase domain occupies 23–295; sequence RYGLSSMQGW…DNMSIVLVCF (273 aa). Residues aspartate 60 and glycine 61 each coordinate Mn(2+). Lysine 142 participates in a covalent cross-link: Glycyl lysine isopeptide (Lys-Gly) (interchain with G-Cter in ISG15). Residues aspartate 243 and aspartate 286 each coordinate Mn(2+). Residue serine 386 is modified to Phosphoserine. A disordered region spans residues 423-479; sequence VEGEESPAEPAATATSSNSDAGNPVTMQESHTESESGLAELDSSNEDAGTKMSGEKI. Positions 430-439 are enriched in low complexity; the sequence is AEPAATATSS. Over residues 440–451 the composition is skewed to polar residues; the sequence is NSDAGNPVTMQE.

The protein belongs to the PP2C family. In terms of assembly, monomer. Interacts with PAK6. Interacts with the phosphorylated form of IKBKB/IKKB. Mg(2+) is required as a cofactor. The cofactor is Mn(2+). Isgylation negatively regulates its activity. Post-translationally, N-myristoylation is essential for the recognition of its substrates for dephosphorylation. Highly expressed in heart and skeletal muscle.

Its subcellular location is the cytoplasm. The protein localises to the cytosol. The protein resides in the membrane. It catalyses the reaction O-phospho-L-seryl-[protein] + H2O = L-seryl-[protein] + phosphate. The catalysed reaction is O-phospho-L-threonyl-[protein] + H2O = L-threonyl-[protein] + phosphate. In terms of biological role, enzyme with a broad specificity. Dephosphorylates CDK2 and CDK6 in vitro. Dephosphorylates PRKAA1 and PRKAA2. Inhibits TBK1-mediated antiviral signaling by dephosphorylating it at 'Ser-172'. Plays an important role in the termination of TNF-alpha-mediated NF-kappa-B activation through dephosphorylating and inactivating IKBKB/IKKB. This is Protein phosphatase 1B (PPM1B) from Homo sapiens (Human).